The sequence spans 605 residues: Elongation factor 4 (605 aa).

Positions 9–192 (SRIRNFCIIA…AIIARVPSPA (184 aa)) constitute a tr-type G domain. GTP-binding positions include 21–26 (DHGKST) and 139–142 (NKID).

The protein belongs to the TRAFAC class translation factor GTPase superfamily. Classic translation factor GTPase family. LepA subfamily.

The protein resides in the cell inner membrane. The catalysed reaction is GTP + H2O = GDP + phosphate + H(+). In terms of biological role, required for accurate and efficient protein synthesis under certain stress conditions. May act as a fidelity factor of the translation reaction, by catalyzing a one-codon backward translocation of tRNAs on improperly translocated ribosomes. Back-translocation proceeds from a post-translocation (POST) complex to a pre-translocation (PRE) complex, thus giving elongation factor G a second chance to translocate the tRNAs correctly. Binds to ribosomes in a GTP-dependent manner. The polypeptide is Elongation factor 4 (Chlorobium phaeovibrioides (strain DSM 265 / 1930) (Prosthecochloris vibrioformis (strain DSM 265))).